Here is a 549-residue protein sequence, read N- to C-terminus: Chaperonin GroEL (549 aa).

Residues 30–33 (TLGP), Lys-51, 87–91 (DGTTT), Gly-415, 479–481 (NAA), and Asp-495 each bind ATP.

The protein belongs to the chaperonin (HSP60) family. As to quaternary structure, forms a cylinder of 14 subunits composed of two heptameric rings stacked back-to-back. Interacts with the co-chaperonin GroES.

The protein resides in the cytoplasm. It carries out the reaction ATP + H2O + a folded polypeptide = ADP + phosphate + an unfolded polypeptide.. In terms of biological role, together with its co-chaperonin GroES, plays an essential role in assisting protein folding. The GroEL-GroES system forms a nano-cage that allows encapsulation of the non-native substrate proteins and provides a physical environment optimized to promote and accelerate protein folding. This Stenotrophomonas maltophilia (strain K279a) protein is Chaperonin GroEL.